The sequence spans 305 residues: tRNA pseudouridine synthase B (305 aa).

Residue Asp39 is the Nucleophile of the active site.

The protein belongs to the pseudouridine synthase TruB family. Type 1 subfamily.

It carries out the reaction uridine(55) in tRNA = pseudouridine(55) in tRNA. Responsible for synthesis of pseudouridine from uracil-55 in the psi GC loop of transfer RNAs. This Staphylococcus haemolyticus (strain JCSC1435) protein is tRNA pseudouridine synthase B.